Reading from the N-terminus, the 493-residue chain is Occludin (493 aa).

The Cytoplasmic portion of the chain corresponds to 1–47; sequence MYSRPSNYAPSKDVYGGEMRSQPAYSYYPEEEIQHFYRWSSPPGIIK. The region spanning 41-250 is the MARVEL domain; sequence SPPGIIKIMS…IIFFAVKTRK (210 aa). The helical transmembrane segment at 48–70 threads the bilayer; it reads IMSILIVVMCVGIFACVASTLPW. At 71–116 the chain is on the extracellular side; the sequence is DLDITGQSMGYGMGSGSYSGGYTGYGFGGSQMGLGFAYGGNYTDPR. The helical transmembrane segment at 117 to 141 threads the bilayer; that stretch reads AAKGFILAMAAFCFIIGLVIFVMLV. Over 142–151 the chain is Cytoplasmic; that stretch reads TRTPLSTSRK. Residues 152–176 traverse the membrane as a helical segment; sequence FYLIVIIVSAIIGGLVFIATIVYTV. Over 177–224 the chain is Extracellular; that stretch reads GVNPVAQASGSAFYTQIVSICNQFYSPVQTGVFVNQYLYHYCVVEPQE. The cysteines at positions 197 and 218 are disulfide-linked. Residues 225–246 form a helical membrane-spanning segment; that stretch reads AIAIVLGFLIVVAFAIIIFFAV. The Cytoplasmic segment spans residues 247–493; that stretch reads KTRKKINQYG…IKQMVSNYDK (247 aa). The tract at residues 334–407 is disordered; the sequence is YGMSPRHYSS…TKQRQEYKQE (74 aa). A compositionally biased stretch (basic residues) spans 352–361; it reads APPKKRPGKP. At Thr-375 the chain carries Phosphothreonine; by CK2; in vitro. Ser-379 is modified (phosphoserine; by CK2; in vitro). The span at 379 to 389 shows a compositional bias: acidic residues; that stretch reads SADELEDDSWD. An OCEL domain is found at 386 to 493; the sequence is DSWDSEYPPI…IKQMVSNYDK (108 aa). The stretch at 396–428 forms a coiled coil; the sequence is TQTKQRQEYKQEFASDLHEYKRLQAELDELSKI.

Belongs to the ELL/occludin family. As to quaternary structure, interacts in vitro with cingulin, possibly directly. Interacts with ZO-1. Post-translationally, phosphorylated. As to expression, localized at tight junctions of both epithelial and endothelial cells.

Its subcellular location is the cell membrane. The protein localises to the cell junction. It is found in the tight junction. Its function is as follows. Probably plays a role in the formation and regulation of the tight junction (TJ) paracellular permeability barrier. The polypeptide is Occludin (ocln) (Xenopus laevis (African clawed frog)).